The following is a 78-amino-acid chain: Large ribosomal subunit protein bL28 (78 aa).

Residues 1-26 (MSAYCQVTGRKPSFGKSVSHSHRRTN) form a disordered region.

This sequence belongs to the bacterial ribosomal protein bL28 family.

This is Large ribosomal subunit protein bL28 from Corynebacterium jeikeium (strain K411).